A 212-amino-acid chain; its full sequence is MILTEPSPLFAALLIVLAYLIGCVPFAVVVSKLMGLKDPRSYGSKNPGATNVLRTGNKTAAALTLLGDAAKGWFALWLALKLAPGLSSLGYGLVLIAVFLGHLYPVSLGFKGGKGVATALGVLFAVSPWLALATVATWLLVAVVTRYSSLAALVAAFLAPVYYFFGGGTIWPLNAPTAAALVGVSALLFYRHSANIDRLIKGKESRIGSKKA.

A run of 5 helical transmembrane segments spans residues 10–30 (FAAL…AVVV), 90–110 (GYGL…SLGF), 124–144 (FAVS…VAVV), 150–170 (LAAL…GGTI), and 171–191 (WPLN…LFYR).

This sequence belongs to the PlsY family. As to quaternary structure, probably interacts with PlsX.

The protein resides in the cell inner membrane. It carries out the reaction an acyl phosphate + sn-glycerol 3-phosphate = a 1-acyl-sn-glycero-3-phosphate + phosphate. Its pathway is lipid metabolism; phospholipid metabolism. Functionally, catalyzes the transfer of an acyl group from acyl-phosphate (acyl-PO(4)) to glycerol-3-phosphate (G3P) to form lysophosphatidic acid (LPA). This enzyme utilizes acyl-phosphate as fatty acyl donor, but not acyl-CoA or acyl-ACP. The chain is Glycerol-3-phosphate acyltransferase from Bordetella avium (strain 197N).